A 210-amino-acid chain; its full sequence is MALELLTPFTKVELEEEKKESNRKQIGILGGNFNPIHNAHLVVADQVRQQLGLDQVLLMPECKPPHVDAKETIDEKHRLRMLELAIEDVEGLAIETCELERQGISYTYDTMLYLTEQHPDVDFYFIIGADMVDYLPKWHRIDELVKLVQFVGVQRPKYKAGTSYPVIWVDLPLIDISSSMIRDFIKKGRQPNYLLPKRVLDYITQEGLYQ.

Belongs to the NadD family.

It carries out the reaction nicotinate beta-D-ribonucleotide + ATP + H(+) = deamido-NAD(+) + diphosphate. The protein operates within cofactor biosynthesis; NAD(+) biosynthesis; deamido-NAD(+) from nicotinate D-ribonucleotide: step 1/1. Its function is as follows. Catalyzes the reversible adenylation of nicotinate mononucleotide (NaMN) to nicotinic acid adenine dinucleotide (NaAD). This is Probable nicotinate-nucleotide adenylyltransferase from Streptococcus pyogenes serotype M1.